The primary structure comprises 450 residues: Phosphoglucosamine mutase (450 aa).

The active-site Phosphoserine intermediate is Ser-101. Mg(2+)-binding residues include Ser-101, Asp-242, Asp-244, and Asp-246. A Phosphoserine modification is found at Ser-101.

This sequence belongs to the phosphohexose mutase family. The cofactor is Mg(2+). Post-translationally, activated by phosphorylation.

The catalysed reaction is alpha-D-glucosamine 1-phosphate = D-glucosamine 6-phosphate. Its function is as follows. Catalyzes the conversion of glucosamine-6-phosphate to glucosamine-1-phosphate. The sequence is that of Phosphoglucosamine mutase from Rhodopseudomonas palustris (strain BisA53).